Reading from the N-terminus, the 81-residue chain is uncharacterized protein (81 aa).

An N-terminal signal peptide occupies residues 1–22 (MNKKLSIIFLIFALIASVLCSA). Positions 29–81 (HSSSTTTTTSSSGGTSGTDSSINTGSSYSGSGSGSGSTGGSGSGSGSGTAKWK) are disordered. The segment covering 30 to 58 (SSSTTTTTSSSGGTSGTDSSINTGSSYSG) has biased composition (low complexity). Positions 59 to 75 (SGSGSGSTGGSGSGSGS) are enriched in gly residues.

The protein resides in the secreted. This is an uncharacterized protein from Dictyostelium discoideum (Social amoeba).